The following is a 274-amino-acid chain: tRNA-cytidine(32) 2-sulfurtransferase (274 aa).

A PP-loop motif motif is present at residues 40–45 (SGGKDS). [4Fe-4S] cluster is bound by residues Cys115, Cys118, and Cys206.

The protein belongs to the TtcA family. In terms of assembly, homodimer. Mg(2+) serves as cofactor. It depends on [4Fe-4S] cluster as a cofactor.

It localises to the cytoplasm. It carries out the reaction cytidine(32) in tRNA + S-sulfanyl-L-cysteinyl-[cysteine desulfurase] + AH2 + ATP = 2-thiocytidine(32) in tRNA + L-cysteinyl-[cysteine desulfurase] + A + AMP + diphosphate + H(+). The protein operates within tRNA modification. Its function is as follows. Catalyzes the ATP-dependent 2-thiolation of cytidine in position 32 of tRNA, to form 2-thiocytidine (s(2)C32). The sulfur atoms are provided by the cysteine/cysteine desulfurase (IscS) system. In Stutzerimonas stutzeri (strain A1501) (Pseudomonas stutzeri), this protein is tRNA-cytidine(32) 2-sulfurtransferase.